Reading from the N-terminus, the 564-residue chain is Urease subunit alpha (564 aa).

Positions Gly-126–Phe-564 constitute a Urease domain. Ni(2+) contacts are provided by His-131, His-133, and Lys-214. Lys-214 bears the N6-carboxylysine mark. Substrate is bound at residue His-216. Positions 243 and 269 each coordinate Ni(2+). The active-site Proton donor is His-317. Asp-357 is a Ni(2+) binding site.

The protein belongs to the metallo-dependent hydrolases superfamily. Urease alpha subunit family. Heterotrimer of UreA (gamma), UreB (beta) and UreC (alpha) subunits. Three heterotrimers associate to form the active enzyme. Ni cation is required as a cofactor. In terms of processing, carboxylation allows a single lysine to coordinate two nickel ions.

Its subcellular location is the cytoplasm. It carries out the reaction urea + 2 H2O + H(+) = hydrogencarbonate + 2 NH4(+). It participates in nitrogen metabolism; urea degradation; CO(2) and NH(3) from urea (urease route): step 1/1. The protein is Urease subunit alpha of Burkholderia thailandensis (strain ATCC 700388 / DSM 13276 / CCUG 48851 / CIP 106301 / E264).